A 513-amino-acid polypeptide reads, in one-letter code: Activin receptor type-2A (513 aa).

A signal peptide spans methionine 1–glycine 19. The Extracellular segment spans residues alanine 20–proline 135. Disulfide bonds link cysteine 30/cysteine 60, cysteine 50/cysteine 78, cysteine 85/cysteine 104, cysteine 91/cysteine 103, and cysteine 105/cysteine 110. N-linked (GlcNAc...) asparagine glycosylation is found at asparagine 43 and asparagine 66. Residues tyrosine 136 to tyrosine 161 traverse the membrane as a helical segment. Residues arginine 162–leucine 513 are Cytoplasmic-facing. The Protein kinase domain occupies leucine 192 to leucine 485. ATP-binding positions include lysine 198 to valine 206 and lysine 219. The active-site Proton acceptor is aspartate 322.

It belongs to the protein kinase superfamily. TKL Ser/Thr protein kinase family. TGFB receptor subfamily. As to quaternary structure, part of a complex consisting of MAGI2/ARIP1, ACVR2A, ACVR1B and SMAD3. Interacts with MAGI2/ARIP1. Interacts with type I receptor ACVR1. Interacts with BMP7. Interacts with TSC22D1/TSC-22. Interacts with activin A/INHBA. Mg(2+) is required as a cofactor. Requires Mn(2+) as cofactor.

It is found in the cell membrane. It catalyses the reaction L-threonyl-[receptor-protein] + ATP = O-phospho-L-threonyl-[receptor-protein] + ADP + H(+). The enzyme catalyses L-seryl-[receptor-protein] + ATP = O-phospho-L-seryl-[receptor-protein] + ADP + H(+). Functionally, on ligand binding, forms a receptor complex consisting of two type II and two type I transmembrane serine/threonine kinases. Type II receptors phosphorylate and activate type I receptors which autophosphorylate, then bind and activate SMAD transcriptional regulators. Receptor for activin A, activin B and inhibin A. Mediates induction of adipogenesis by GDF6. This Rattus norvegicus (Rat) protein is Activin receptor type-2A.